The sequence spans 393 residues: Na(+)/H(+) antiporter NhaA (393 aa).

The next 11 membrane-spanning stretches (helical) occupy residues 18–38 (AGGV…NSPW), 65–85 (MLIW…GLEI), 101–121 (MLPA…YAAI), 131–151 (GWGI…VLLG), 160–180 (VFLT…IAFF), 184–204 (NLSP…LGLN), 210–230 (AVGP…KSGI), 260–280 (ALQP…NAGV), 298–318 (IAFG…WLLI), 334–354 (FFGV…IGSL), and 369–389 (IGVL…LLAS).

It belongs to the NhaA Na(+)/H(+) (TC 2.A.33) antiporter family.

The protein resides in the cell inner membrane. It catalyses the reaction Na(+)(in) + 2 H(+)(out) = Na(+)(out) + 2 H(+)(in). In terms of biological role, na(+)/H(+) antiporter that extrudes sodium in exchange for external protons. This is Na(+)/H(+) antiporter NhaA from Albidiferax ferrireducens (strain ATCC BAA-621 / DSM 15236 / T118) (Rhodoferax ferrireducens).